A 185-amino-acid polypeptide reads, in one-letter code: Ribosome-recycling factor (185 aa).

The protein belongs to the RRF family.

Its subcellular location is the cytoplasm. Its function is as follows. Responsible for the release of ribosomes from messenger RNA at the termination of protein biosynthesis. May increase the efficiency of translation by recycling ribosomes from one round of translation to another. This is Ribosome-recycling factor from Xylella fastidiosa (strain 9a5c).